Reading from the N-terminus, the 595-residue chain is Estrogen receptor (595 aa).

A modulating (transactivation AF-1); mediates interaction with MACROD1 region spans residues 1 to 184 (MTMTLHTKAS…AMESAKETRY (184 aa)). S10 carries O-linked (GlcNAc) serine glycosylation. The tract at residues 35–47 (LERPLGEVYVDSS) is required for interaction with NCOA1. The segment at 35–174 (LERPLGEVYV…LASTSDKGSM (140 aa)) is interaction with DDX5; self-association. S104 and S106 each carry phosphoserine; by CDK2. At S118 the chain carries Phosphoserine. The segment at 144–174 (AGPPAFYRPNSDNRRQGGRERLASTSDKGSM) is disordered. A compositionally biased stretch (basic and acidic residues) spans 154–165 (SDNRRQGGRERL). S167 carries the post-translational modification Phosphoserine; by CK2. 2 consecutive NR C4-type zinc fingers follow at residues 185–205 (CAVCNDYASGYHYGVWSCEGC) and 221–245 (CPATNQCTIDKNRRKSCQACRLRKC). The segment at residues 185–250 (CAVCNDYASG…RLRKCYEVGM (66 aa)) is a DNA-binding region (nuclear receptor). Positions 185–310 (CAVCNDYASG…TKKNSPVLSL (126 aa)) are mediates interaction with DNTTIP2. The hinge stretch occupies residues 251–310 (MKGGIRKDRRGGRMLKHKRQRDDGEGRNEAVPPGDMRSANLWPSPLLIKHTKKNSPVLSL). Over residues 257-269 (KDRRGGRMLKHKR) the composition is skewed to basic residues. Positions 257-288 (KDRRGGRMLKHKRQRDDGEGRNEAVPPGDMRS) are disordered. Asymmetric dimethylarginine; by PRMT1 is present on R260. The tract at residues 262 to 595 (GRMLKHKRQR…GEAENFPTTI (334 aa)) is interaction with AKAP13. The self-association stretch occupies residues 264–594 (MLKHKRQRDD…TGEAENFPTT (331 aa)). An NR LBD domain is found at 311-547 (TADQMISALL…DLLLEMLDAH (237 aa)). The tract at residues 311 to 594 (TADQMISALL…TGEAENFPTT (284 aa)) is transactivation AF-2. 2 residues coordinate 17beta-estradiol: E353 and R394. C447 carries S-palmitoyl cysteine lipidation. H524 contacts 17beta-estradiol. At Y537 the chain carries Phosphotyrosine; by Tyr-kinases. Residues 551–575 (APTNLGGPPPEDMSQSQLATSGSTP) form a disordered region. Over residues 563–575 (MSQSQLATSGSTP) the composition is skewed to polar residues.

This sequence belongs to the nuclear hormone receptor family. NR3 subfamily. In terms of assembly, binds DNA as a homodimer. Can form a heterodimer with ESR2. Interacts with coactivator NCOA5. Interacts with PELP1, the interaction is enhanced by 17-beta-estradiol; the interaction increases ESR1 transcriptional activity. Interacts with NCOA7; the interaction is ligand-inducible. Interacts with AKAP13, CUEDC2, HEXIM1, KDM5A, MAP1S, SMARD1, and UBE1C. Interacts with MUC1; the interaction is stimulated by 7 beta-estradiol (E2) and enhances ESR1-mediated transcription. Interacts with DNTTIP2, and UIMC1. Interacts with KMT2D/MLL2. Interacts with ATAD2; the interaction is enhanced by estradiol. Interacts with KIF18A and LDB1. Interacts with RLIM (via its C-terminus). Interacts with MACROD1. Interacts with SH2D4A and PLCG. Interacts with SH2D4A; the interaction blocks binding to PLCG and inhibits estrogen-induced cell proliferation. Interacts with DYNLL1. Interacts with CCDC62; the interaction requires estradiol and appears to enhance the transcription of target genes. Interacts with NR2C1; the interaction prevents homodimerization of ESR1 and suppresses its transcriptional activity and cell growth. Interacts with DNAAF4. Interacts with PRMT2. Interacts with RBFOX2. Interacts with EP300; the interaction is estrogen-dependent and enhanced by CITED1. Interacts with CITED1; the interaction is estrogen-dependent. Interacts with FAM120B, FOXL2, PHB2 and SLC30A9. Interacts with coactivators NCOA3 and NCOA6. Interacts with STK3/MST2 only in the presence of SAV1 and vice-versa. Binds to CSNK1D. Interacts with NCOA2; NCOA2 can interact with ESR1 AF-1 and AF-2 domains simultaneously and mediate their transcriptional synergy. Interacts with DDX5. Interacts with NCOA1; the interaction seems to require a self-association of N-terminal and C-terminal regions. Interacts with ZNF366, DDX17, NFKB1, RELA, SP1 and SP3. Interacts with NRIP1. Interacts with GPER1; the interaction occurs in an estrogen-dependent manner. Interacts with CLOCK and the interaction is stimulated by estrogen. Interacts with TRIP4 (ufmylated); estrogen dependent. Interacts with LMTK3; the interaction phosphorylates ESR1 (in vitro) and protects it against proteasomal degradation. Interacts with CCAR2 (via N-terminus) in a ligand-independent manner. Interacts with ZFHX3. Interacts with SFR1 in a ligand-dependent and -independent manner. Interacts with DCAF13, LATS1 and DCAF1; regulates ESR1 ubiquitination and ubiquitin-mediated proteasomal degradation. Interacts (via DNA-binding domain) with POU4F2 (C-terminus); this interaction increases the estrogen receptor ESR1 transcriptional activity in a DNA- and ligand 17-beta-estradiol-independent manner. Interacts with ESRRB isoform 1. Interacts with UBE3A and WBP2. Interacts with GTF2B. Interacts with RBM39. In the absence of hormonal ligand, interacts with TACC1. Interacts with PI3KR1 or PI3KR2 and PTK2/FAK1. Interacts with SRC. Interacts with BAG1; the interaction is promoted in the absence of estradiol (17-beta-estradiol/E2). Interacts with and ubiquitinated by STUB1; the interaction is promoted in the absence of estradiol (17-beta-estradiol/E2). Interacts with NEDD8. In terms of processing, phosphorylated by cyclin A/CDK2 and CK1. Phosphorylation probably enhances transcriptional activity. Dephosphorylation at Ser-118 by PPP5C inhibits its transactivation activity. Phosphorylated by LMTK3 (in vitro). Ubiquitinated; regulated by LATS1 via DCAF1 it leads to ESR1 proteasomal degradation. Deubiquitinated by OTUB1. Ubiquitinated by STUB1/CHIP; in the CA1 hippocampal region following loss of endogenous circulating estradiol (17-beta-estradiol/E2). Ubiquitinated by UBR5, leading to its degradation: UBR5 specifically recognizes and binds ligand-bound ESR1 when it is not associated with coactivators (NCOAs). In presence of NCOAs, the UBR5-degron is not accessible, preventing its ubiquitination and degradation. Post-translationally, palmitoylated at Cys-447 by ZDHHC7 and ZDHHC21. Palmitoylation is required for plasma membrane targeting and for rapid intracellular signaling via ERK and AKT kinases and cAMP generation, but not for signaling mediated by the nuclear hormone receptor. In terms of processing, dimethylated by PRMT1 at Arg-260. The methylation may favor cytoplasmic localization. Demethylated by JMJD6 at Arg-260.

The protein localises to the nucleus. It is found in the cytoplasm. It localises to the golgi apparatus. The protein resides in the cell membrane. In terms of biological role, nuclear hormone receptor. The steroid hormones and their receptors are involved in the regulation of eukaryotic gene expression and affect cellular proliferation and differentiation in target tissues. Ligand-dependent nuclear transactivation involves either direct homodimer binding to a palindromic estrogen response element (ERE) sequence or association with other DNA-binding transcription factors, such as AP-1/c-Jun, c-Fos, ATF-2, Sp1 and Sp3, to mediate ERE-independent signaling. Ligand binding induces a conformational change allowing subsequent or combinatorial association with multiprotein coactivator complexes through LXXLL motifs of their respective components. Mutual transrepression occurs between the estrogen receptor (ER) and NF-kappa-B in a cell-type specific manner. Decreases NF-kappa-B DNA-binding activity and inhibits NF-kappa-B-mediated transcription from the IL6 promoter and displace RELA/p65 and associated coregulators from the promoter. Recruited to the NF-kappa-B response element of the CCL2 and IL8 promoters and can displace CREBBP. Present with NF-kappa-B components RELA/p65 and NFKB1/p50 on ERE sequences. Can also act synergistically with NF-kappa-B to activate transcription involving respective recruitment adjacent response elements; the function involves CREBBP. Can activate the transcriptional activity of TFF1. Also mediates membrane-initiated estrogen signaling involving various kinase cascades. Essential for MTA1-mediated transcriptional regulation of BRCA1 and BCAS3. Maintains neuronal survival in response to ischemic reperfusion injury when in the presence of circulating estradiol (17-beta-estradiol/E2). The chain is Estrogen receptor (ESR1) from Sus scrofa (Pig).